A 362-amino-acid polypeptide reads, in one-letter code: Ferrochelatase (362 aa).

2 residues coordinate Fe cation: His228 and Glu309.

It belongs to the ferrochelatase family.

It is found in the cytoplasm. The enzyme catalyses heme b + 2 H(+) = protoporphyrin IX + Fe(2+). Its pathway is porphyrin-containing compound metabolism; protoheme biosynthesis; protoheme from protoporphyrin-IX: step 1/1. Catalyzes the ferrous insertion into protoporphyrin IX. The sequence is that of Ferrochelatase from Bordetella bronchiseptica (strain ATCC BAA-588 / NCTC 13252 / RB50) (Alcaligenes bronchisepticus).